A 331-amino-acid polypeptide reads, in one-letter code: tRNA N6-adenosine threonylcarbamoyltransferase (331 aa).

The Fe cation site is built by H109, H113, and Y130. Residues 130 to 134 (YLSGG), D162, D183, and S262 each bind substrate. D290 provides a ligand contact to Fe cation.

This sequence belongs to the KAE1 / TsaD family. Requires Fe(2+) as cofactor.

The protein resides in the cytoplasm. The catalysed reaction is L-threonylcarbamoyladenylate + adenosine(37) in tRNA = N(6)-L-threonylcarbamoyladenosine(37) in tRNA + AMP + H(+). Functionally, required for the formation of a threonylcarbamoyl group on adenosine at position 37 (t(6)A37) in tRNAs that read codons beginning with adenine. Is probably involved in the transfer of the threonylcarbamoyl moiety of threonylcarbamoyl-AMP (TC-AMP) to the N6 group of A37. This is tRNA N6-adenosine threonylcarbamoyltransferase from Saccharolobus islandicus (strain Y.G.57.14 / Yellowstone #1) (Sulfolobus islandicus).